The sequence spans 823 residues: MKRHRPVSSSESSDECPSTSFTSSSMYRKKSKNPKEQKKSAEVFRKDLISAMKIPDSHHVNPDSYYLFTDTWKEEWEKGVQVPANPDSVPTPSLRIISEKVKEMLFVRPRKYIRCSSPESAEPGYINTLEQAASTCRYDLDDMDIFWLQELNEDLGEMGYGPIDETLMEKTIEVLERHCHENMNHAIETVEGLGIEYDEDVICDVCRSPDSEEGNDMVFCDKCNVCVHQACYGILKIPEGSWLCRSCVLGIYPQCVLCPKKGGAMKTTRTGTKWAHVSCALWIPEVSIACPERMEPVTKISHIPPSRWALVCNLCKLKTGACIQCSVKSCITAFHVTCAFEHGLEMKTILDEGDEVKFKSFCLKHSQNKPKLGDAEYHHHRVAEQSQAKSEKTSLRAQKLRELEEEFYTLVQVEDVAKEMELSAFTVDFIYNYWKLKRKSNFNKPLIPPKEEEENGLVQPKEESIHTRMRMFMHLRQDLERVRNLCYMISRREKLKLSHTKVQEQIFGLQVQLINEEITEGLSLTNALENSLFYPPPRITLKLKMPKSTSEDCKDSSTETEHQLSSPGSSSPGHSKRSPQMPEEPLDMNVKIYPRYPLESKSNCLQTSRSHSRCETKSSSPTPRAPSAEFYHGQSLGKPLALQAALHGQVSIGNGKNQPNSRVSSSNGLEGNWSGNITQKVNSSEVCYDQESMLSSHLPSPGNIRKSSMEHFSRSFKEATNTWVKPTEDLQYCVKPTKNVSSKEQLWGRQLLRRPTGRASYQETDGYCPDLEPSDSEAEGEGSKETPRVKRESSDRENPSHDSARECHGKTKTHPHSHSSMQR.

Residues 1–40 (MKRHRPVSSSESSDECPSTSFTSSSMYRKKSKNPKEQKKS) form a disordered region. The segment covering 8-20 (SSSESSDECPSTS) has biased composition (low complexity). 3 positions are modified to N6-acetyllysine: Lys-30, Lys-32, and Lys-35. The PHD-type 1 zinc-finger motif lies at 200 to 250 (DVICDVCRSPDSEEGNDMVFCDKCNVCVHQACYGILKIPEGSWLCRSCVLG). Residues 252-286 (YPQCVLCPKKGGAMKTTRTGTKWAHVSCALWIPEV) form a C2HC pre-PHD-type zinc finger. The segment at 310–366 (LVCNLCKLKTGACIQCSVKSCITAFHVTCAFEHGLEMKTILDEGDEVKFKSFCLKHS) adopts a PHD-type 2 zinc-finger fold. Disordered stretches follow at residues 543–585 (LKMP…PEEP) and 601–631 (KSNCLQTSRSHSRCETKSSSPTPRAPSAEFY). A compositionally biased stretch (basic and acidic residues) spans 549-562 (TSEDCKDSSTETEH). Ser-566 and Ser-578 each carry phosphoserine. Lys-601 carries the N6-acetyllysine modification. The residue at position 608 (Ser-608) is a Phosphoserine. At Lys-638 the chain carries N6-acetyllysine. Residues 651–676 (SIGNGKNQPNSRVSSSNGLEGNWSGN) form a disordered region. Lys-735 carries the post-translational modification N6-acetyllysine. The tract at residues 756–823 (TGRASYQETD…HPHSHSSMQR (68 aa)) is disordered. A phosphoserine mark is found at Ser-774 and Ser-776. A compositionally biased stretch (basic and acidic residues) spans 781 to 809 (EGSKETPRVKRESSDRENPSHDSARECHG).

The protein belongs to the JADE family. As to quaternary structure, component of the HBO1 complex composed at least of ING4 or ING5, MYST2/HBO1, MEAF6, and one of JADE1, JADE2 and JADE3.

Functionally, scaffold subunit of some HBO1 complexes, which have a histone H4 acetyltransferase activity. This Mus musculus (Mouse) protein is Protein Jade-3 (Jade3).